Consider the following 185-residue polypeptide: Testis development-related protein (185 aa).

Disordered stretches follow at residues 1–29 (MWKLGRGRVLLDEPPEEEDGLRGGPPPAA) and 121–156 (ADPEDTVGGHPSWSGWEDDAKGSTKYTSLASSANSS).

The protein belongs to the TDRP family. As to quaternary structure, interacts with PRM2. In terms of tissue distribution, expressed in spermatogenic cells, especially in spermatocytes (at protein level).

It localises to the nucleus. Its subcellular location is the cytoplasm. Functionally, contributes to normal sperm motility, but not essential for male fertility. This Homo sapiens (Human) protein is Testis development-related protein (TDRP).